Reading from the N-terminus, the 344-residue chain is tRNA(Ile)-lysidine synthase (344 aa).

Ser43–Ser48 contributes to the ATP binding site.

It belongs to the tRNA(Ile)-lysidine synthase family.

Its subcellular location is the cytoplasm. It catalyses the reaction cytidine(34) in tRNA(Ile2) + L-lysine + ATP = lysidine(34) in tRNA(Ile2) + AMP + diphosphate + H(+). Ligates lysine onto the cytidine present at position 34 of the AUA codon-specific tRNA(Ile) that contains the anticodon CAU, in an ATP-dependent manner. Cytidine is converted to lysidine, thus changing the amino acid specificity of the tRNA from methionine to isoleucine. The sequence is that of tRNA(Ile)-lysidine synthase from Bordetella parapertussis (strain 12822 / ATCC BAA-587 / NCTC 13253).